The following is a 318-amino-acid chain: Basic leucine zipper (bZIP) transcription factor atfB (318 aa).

The interval 114–157 is disordered; the sequence is FNSSPPEYAPPKHRSSLSEQSQTDGYGVSTRRRKASAIDQCEQQ. A basic motif region spans residues 160-199; it reads REKREKFLERNRLAASKCRQKKKEHTKLLETRFREVSNKK. One can recognise a bZIP domain in the interval 160–223; the sequence is REKREKFLER…LNLKNEMLRH (64 aa). The segment at 202-216 is leucine-zipper; it reads LESEIEHLRSEVLNL. Residues 275–301 are disordered; that stretch reads DGPMQLPSEMGSPLDQRRDSEQSIMTE.

This sequence belongs to the bZIP family. ATF subfamily.

Its subcellular location is the nucleus. Its function is as follows. Transcription factor that acts as a key player in the regulatory circuit that integrates secondary metabolism and cellular response to oxidative stress. Regulates the genes involved in development and stress response through direct binding to their promoters. This is Basic leucine zipper (bZIP) transcription factor atfB from Aspergillus flavus (strain ATCC 200026 / FGSC A1120 / IAM 13836 / NRRL 3357 / JCM 12722 / SRRC 167).